A 152-amino-acid chain; its full sequence is Deoxyuridine 5'-triphosphate nucleotidohydrolase (152 aa).

Substrate contacts are provided by residues 71-73, Asn-84, and 88-90; these read RSG and TVD.

It belongs to the dUTPase family. Mg(2+) serves as cofactor.

It catalyses the reaction dUTP + H2O = dUMP + diphosphate + H(+). It participates in pyrimidine metabolism; dUMP biosynthesis; dUMP from dCTP (dUTP route): step 2/2. In terms of biological role, this enzyme is involved in nucleotide metabolism: it produces dUMP, the immediate precursor of thymidine nucleotides and it decreases the intracellular concentration of dUTP so that uracil cannot be incorporated into DNA. The polypeptide is Deoxyuridine 5'-triphosphate nucleotidohydrolase (Maricaulis maris (strain MCS10) (Caulobacter maris)).